The chain runs to 384 residues: MTVTAKTAARALLPNGLRDVLPPDAAFEVATVERLVSVFAANGYERVKTPLIEFEEGLLTGASRATAGQTFRVMDPITQRMMGLRADITIQVARLAASRLAKAPRPLRLTYSGQVLRVKGTQLRPERQFTQAGIELIGAGGVDAIAESVLLTVEALAQAGLPRVTVDLNCPPLVPALCRALGLSEDLAGELRKLLEQKDFTAAAALAGDAAGALSALSGTVGPAERALPVLAALDLPGEAAGHRDALLALARKVMTAAPEVDVTVDPLEHKGFEYYTGCSFALFAQGARGELGRGGEYPGDLNGTVEPCCGATLYMDAVLDGMVRPAPAPRVLVASTLARTTRRALQADGWVTVPALTAEAGAAEARRLGCGHVLDDEGRPVAV.

The protein belongs to the class-II aminoacyl-tRNA synthetase family. HisZ subfamily. As to quaternary structure, heteromultimer composed of HisG and HisZ subunits.

It is found in the cytoplasm. Its pathway is amino-acid biosynthesis; L-histidine biosynthesis; L-histidine from 5-phospho-alpha-D-ribose 1-diphosphate: step 1/9. Required for the first step of histidine biosynthesis. May allow the feedback regulation of ATP phosphoribosyltransferase activity by histidine. The polypeptide is ATP phosphoribosyltransferase regulatory subunit (Rhodospirillum rubrum (strain ATCC 11170 / ATH 1.1.1 / DSM 467 / LMG 4362 / NCIMB 8255 / S1)).